We begin with the raw amino-acid sequence, 186 residues long: Oligoribonuclease (186 aa).

Positions 8–171 constitute an Exonuclease domain; sequence LIWIDLEMTG…DDIRESIAEL (164 aa). Tyr-129 is an active-site residue.

This sequence belongs to the oligoribonuclease family.

Its subcellular location is the cytoplasm. 3'-to-5' exoribonuclease specific for small oligoribonucleotides. This Mannheimia succiniciproducens (strain KCTC 0769BP / MBEL55E) protein is Oligoribonuclease.